We begin with the raw amino-acid sequence, 393 residues long: Cobalt-precorrin-5B C(1)-methyltransferase (393 aa).

A disordered region spans residues 1–35; that stretch reads MSDETRVGEAAEQAATPEKIRKGSARRERGNRTGF. Basic and acidic residues predominate over residues 18-31; sequence EKIRKGSARRERGN.

It belongs to the CbiD family.

The catalysed reaction is Co-precorrin-5B + S-adenosyl-L-methionine = Co-precorrin-6A + S-adenosyl-L-homocysteine. It participates in cofactor biosynthesis; adenosylcobalamin biosynthesis; cob(II)yrinate a,c-diamide from sirohydrochlorin (anaerobic route): step 6/10. Functionally, catalyzes the methylation of C-1 in cobalt-precorrin-5B to form cobalt-precorrin-6A. The polypeptide is Cobalt-precorrin-5B C(1)-methyltransferase (Dechloromonas aromatica (strain RCB)).